The primary structure comprises 196 residues: Recombination protein RecR (196 aa).

The segment at 57–72 adopts a C4-type zinc-finger fold; that stretch reads CERCNTFTEAPVCSTC. Positions 80–175 constitute a Toprim domain; the sequence is RQLCVVETPA…SVTRLARGVP (96 aa).

It belongs to the RecR family.

Functionally, may play a role in DNA repair. It seems to be involved in an RecBC-independent recombinational process of DNA repair. It may act with RecF and RecO. This Methylibium petroleiphilum (strain ATCC BAA-1232 / LMG 22953 / PM1) protein is Recombination protein RecR.